The chain runs to 213 residues: MDTLWDISPPVSPATPVWPGDTPVAVERVWRMEAGSPVNVARLTLSPHTGAHCDAPLHYDADGAPIGAVPLDTYLGPCRVIHCIGASPVVRPADVEAALDGVPPRVLLRTYARAAVEQWDSNFCAVAPDTVDLLAAHGVKLIGIDTPSLDPQESKTMDAHHRVRAHRMAILEGIVLDDVPPGDYELIALPLKFATLDASPVRAVLRALPAHAS.

Tryptophan 18 lines the substrate pocket. Zn(2+) is bound by residues histidine 48, histidine 52, and aspartate 54. Histidine 58 functions as the Proton donor/acceptor in the catalytic mechanism. Zn(2+) is bound by residues histidine 160 and glutamate 172.

The protein belongs to the Cyclase 1 superfamily. KynB family. In terms of assembly, homodimer. It depends on Zn(2+) as a cofactor.

It catalyses the reaction N-formyl-L-kynurenine + H2O = L-kynurenine + formate + H(+). Its pathway is amino-acid degradation; L-tryptophan degradation via kynurenine pathway; L-kynurenine from L-tryptophan: step 2/2. Its function is as follows. Catalyzes the hydrolysis of N-formyl-L-kynurenine to L-kynurenine, the second step in the kynurenine pathway of tryptophan degradation. This Burkholderia cenocepacia (strain HI2424) protein is Kynurenine formamidase.